Here is a 250-residue protein sequence, read N- to C-terminus: Deoxynucleoside-5'-monophosphate kinase (250 aa).

Residues Gly14, Asp16, and Thr17 each coordinate ATP. DGMP is bound by residues Val44, Lys65, Arg130, Gly137, Thr138, Trp150, Asp170, Arg172, Glu176, and Ser210.

The protein belongs to the dNMP kinase family. Monomer.

It catalyses the reaction a 2'-deoxyribonucleoside 5'-phosphate + ATP = a 2'-deoxyribonucleoside 5'-diphosphate + ADP. Functionally, allows the synthesis of deoxyribonucleoside triphosphates necessary for the rapid viral DNA replication. Phosphorylates all four dNMPs. The enzyme had the highest activity with dAMP and had about 30% less activity with dTMP and dGMP, respectively. The lowest activity was observed with dCMP as the substrate (about 35% of that with dAMP). In Escherichia coli (Enterobacteria phage T5), this protein is Deoxynucleoside-5'-monophosphate kinase.